A 283-amino-acid polypeptide reads, in one-letter code: 4-hydroxybenzoate octaprenyltransferase (283 aa).

The next 9 helical transmembrane spans lie at 16 to 36, 40 to 60, 85 to 105, 108 to 128, 135 to 155, 160 to 180, 204 to 224, 226 to 246, and 263 to 283; these read PIGT…AGAG, LRIV…GCVI, ISAT…FGLV, LNTE…LYPF, LPQI…FTAL, WFIA…YDTE, FDRL…GWIL, LITV…LFAY, and FLHN…HYWF.

Belongs to the UbiA prenyltransferase family. Requires Mg(2+) as cofactor.

It localises to the cell inner membrane. The catalysed reaction is all-trans-octaprenyl diphosphate + 4-hydroxybenzoate = 4-hydroxy-3-(all-trans-octaprenyl)benzoate + diphosphate. It participates in cofactor biosynthesis; ubiquinone biosynthesis. In terms of biological role, catalyzes the prenylation of para-hydroxybenzoate (PHB) with an all-trans polyprenyl group. Mediates the second step in the final reaction sequence of ubiquinone-8 (UQ-8) biosynthesis, which is the condensation of the polyisoprenoid side chain with PHB, generating the first membrane-bound Q intermediate 3-octaprenyl-4-hydroxybenzoate. The protein is 4-hydroxybenzoate octaprenyltransferase of Idiomarina loihiensis (strain ATCC BAA-735 / DSM 15497 / L2-TR).